The chain runs to 428 residues: Enolase (428 aa).

Glutamine 164 contributes to the (2R)-2-phosphoglycerate binding site. Glutamate 206 (proton donor) is an active-site residue. 3 residues coordinate Mg(2+): aspartate 243, glutamate 286, and aspartate 313. (2R)-2-phosphoglycerate-binding residues include lysine 338, arginine 367, serine 368, and lysine 389. Catalysis depends on lysine 338, which acts as the Proton acceptor.

It belongs to the enolase family. Mg(2+) is required as a cofactor.

It localises to the cytoplasm. The protein resides in the secreted. The protein localises to the cell surface. The enzyme catalyses (2R)-2-phosphoglycerate = phosphoenolpyruvate + H2O. It participates in carbohydrate degradation; glycolysis; pyruvate from D-glyceraldehyde 3-phosphate: step 4/5. Its function is as follows. Catalyzes the reversible conversion of 2-phosphoglycerate (2-PG) into phosphoenolpyruvate (PEP). It is essential for the degradation of carbohydrates via glycolysis. This Dehalococcoides mccartyi (strain ATCC BAA-2266 / KCTC 15142 / 195) (Dehalococcoides ethenogenes (strain 195)) protein is Enolase.